The chain runs to 412 residues: Probable tRNA sulfurtransferase (412 aa).

The disordered stretch occupies residues 1-22 (MPDIFTDNTDKQDSDPSRQGFE). Residues 82–190 (PRAAEAAADV…QNLAYVYLET (109 aa)) enclose the THUMP domain. ATP-binding positions include 208-209 (LM), Lys-292, Gly-314, and Gln-323.

This sequence belongs to the ThiI family.

Its subcellular location is the cytoplasm. It carries out the reaction [ThiI sulfur-carrier protein]-S-sulfanyl-L-cysteine + a uridine in tRNA + 2 reduced [2Fe-2S]-[ferredoxin] + ATP + H(+) = [ThiI sulfur-carrier protein]-L-cysteine + a 4-thiouridine in tRNA + 2 oxidized [2Fe-2S]-[ferredoxin] + AMP + diphosphate. It catalyses the reaction [ThiS sulfur-carrier protein]-C-terminal Gly-Gly-AMP + S-sulfanyl-L-cysteinyl-[cysteine desulfurase] + AH2 = [ThiS sulfur-carrier protein]-C-terminal-Gly-aminoethanethioate + L-cysteinyl-[cysteine desulfurase] + A + AMP + 2 H(+). Its pathway is cofactor biosynthesis; thiamine diphosphate biosynthesis. Catalyzes the ATP-dependent transfer of a sulfur to tRNA to produce 4-thiouridine in position 8 of tRNAs, which functions as a near-UV photosensor. Also catalyzes the transfer of sulfur to the sulfur carrier protein ThiS, forming ThiS-thiocarboxylate. This is a step in the synthesis of thiazole, in the thiamine biosynthesis pathway. The sulfur is donated as persulfide by IscS. This chain is Probable tRNA sulfurtransferase, found in Methanosarcina acetivorans (strain ATCC 35395 / DSM 2834 / JCM 12185 / C2A).